A 463-amino-acid polypeptide reads, in one-letter code: Peptidase inhibitor 16 (463 aa).

A signal peptide spans 1–27; sequence MHGSCSFLMLLLPLLLLLVATTGPVGA. The SCP domain maps to 37 to 165; it reads VELHNLYRAQ…TNIELLVCNY (129 aa). A glycan (N-linked (GlcNAc...) asparagine) is linked at asparagine 114. Disordered stretches follow at residues 262 to 281, 303 to 341, and 383 to 408; these read TQAP…TEAP, EPVT…DPKM, and LQAT…SATA. The segment covering 318–327 has biased composition (basic and acidic residues); it reads SADKVTDKTK. The segment at 386–395 is O-glycosylated at one site; the sequence is TLDHTGHTSS. The segment covering 392 to 408 has biased composition (polar residues); that stretch reads HTSSKSLPNFPNTSATA. 2 N-linked (GlcNAc...) asparagine glycosylation sites follow: asparagine 403 and asparagine 409.

The protein belongs to the CRISP family. As to quaternary structure, interacts with PSP94/MSMB. In terms of processing, N- and O-glycosylated. O-glycosylated with core 1 or possibly core 8 glycans. In terms of tissue distribution, expressed in prostate, testis, ovary and intestine. Concentrates in prostate cancer patient's sera.

It is found in the secreted. Functionally, may inhibit cardiomyocyte growth. In Homo sapiens (Human), this protein is Peptidase inhibitor 16 (PI16).